Consider the following 372-residue polypeptide: Heat-inducible transcription repressor HrcA (372 aa).

Residues 300-334 (YGRSGAAGEPAGNDPVGEPETESETESQTNDTEPI) are disordered.

The protein belongs to the HrcA family.

Its function is as follows. Negative regulator of class I heat shock genes (grpE-dnaK-dnaJ and groELS operons). Prevents heat-shock induction of these operons. The chain is Heat-inducible transcription repressor HrcA from Bifidobacterium longum (strain DJO10A).